The primary structure comprises 467 residues: MVHIPSDVTPPRLCVVEKLNGENEYGYNLHAEKGRGQFVGTVDPDSPAERGGLITGDRIFAVNGHSIIGENHKKVVERIKANPNRCEMLVISEEGAKWYNENNVQITLDLPNIERVSPMSKETPVFVPPPPPPTDAMPYLPRLAELNKGTPDQEFGFNLHAERGRGHFIGTVDAGGIGEKAGLEAGQRIVGVNGQLIYPTTGHKEVVALIKKDTMKTTLLVASEDVDKYHKDHNIAYSWDNVERVDTRPVINVETHHHHEEVSVPKSNGYDVPPLNPHSIQVNEEREISKMTTTTRTETITNSNSAYQYKESSTAYDAYATPPVDSNDLMDEVFGRVNLPGVTMSSHTEVLPPTDDISSVSSLSSHRESAVDVPVSHQYVPSYATESHQKHEQHSQTHHHHHQHQQPSPLSNGSSHGYAASSTSGYDDDDIYHLSAREARERLRMKNRKHHLHEMSLNEKYQLVSNM.

2 PDZ domains span residues 12 to 94 and 143 to 225; these read RLCV…ISEE and LAEL…ASED. The disordered stretch occupies residues 344–429; the sequence is MSSHTEVLPP…ASSTSGYDDD (86 aa). Polar residues predominate over residues 407-425; sequence PSPLSNGSSHGYAASSTSG.

As to quaternary structure, interacts (via PDZ 2 domain) with aat-6 (via PDZ-binding motif); the interaction sequesters aat-6 to the apical cell membrane of intestinal cells. Phosphorylated. As to expression, expressed in the excretory canal and intestine. Expressed on the apical cell membrane of intestinal cells (at protein level).

The protein localises to the cell projection. It localises to the microvillus membrane. Its subcellular location is the apical cell membrane. Scaffold protein that connects plasma membrane proteins with members of the ezrin/moesin/radixin family and thereby helps to link them to the actin cytoskeleton and to regulate their surface expression. Anchors the amino acid transporter protein aat-6 to the apical cell membrane of intestinal cells, particularly in older animals, in order to maintain amino acid homeostasis. May play a role in promoting fertility. The chain is Na(+)/H(+) exchange regulatory cofactor-like protein nrfl-1 from Caenorhabditis elegans.